Reading from the N-terminus, the 341-residue chain is tRNA N6-adenosine threonylcarbamoyltransferase (341 aa).

Fe cation contacts are provided by histidine 111 and histidine 115. Residues 133–137 (VVSGG), aspartate 166, glycine 179, aspartate 183, and asparagine 271 contribute to the substrate site. Aspartate 299 provides a ligand contact to Fe cation.

The protein belongs to the KAE1 / TsaD family. The cofactor is Fe(2+).

Its subcellular location is the cytoplasm. It carries out the reaction L-threonylcarbamoyladenylate + adenosine(37) in tRNA = N(6)-L-threonylcarbamoyladenosine(37) in tRNA + AMP + H(+). Functionally, required for the formation of a threonylcarbamoyl group on adenosine at position 37 (t(6)A37) in tRNAs that read codons beginning with adenine. Is involved in the transfer of the threonylcarbamoyl moiety of threonylcarbamoyl-AMP (TC-AMP) to the N6 group of A37, together with TsaE and TsaB. TsaD likely plays a direct catalytic role in this reaction. This Fusobacterium nucleatum subsp. nucleatum (strain ATCC 25586 / DSM 15643 / BCRC 10681 / CIP 101130 / JCM 8532 / KCTC 2640 / LMG 13131 / VPI 4355) protein is tRNA N6-adenosine threonylcarbamoyltransferase.